The sequence spans 1052 residues: Error-prone DNA polymerase (1052 aa).

This sequence belongs to the DNA polymerase type-C family. DnaE2 subfamily.

The protein localises to the cytoplasm. The catalysed reaction is DNA(n) + a 2'-deoxyribonucleoside 5'-triphosphate = DNA(n+1) + diphosphate. In terms of biological role, DNA polymerase involved in damage-induced mutagenesis and translesion synthesis (TLS). It is not the major replicative DNA polymerase. This is Error-prone DNA polymerase from Bordetella bronchiseptica (strain ATCC BAA-588 / NCTC 13252 / RB50) (Alcaligenes bronchisepticus).